The following is a 326-amino-acid chain: Malate dehydrogenase (326 aa).

An NAD(+)-binding site is contributed by 12–18 (GGTGQIA). Arg93 and Arg99 together coordinate substrate. NAD(+)-binding positions include Asn106, Gln113, and 130–132 (VGN). Residues Asn132 and Arg163 each contribute to the substrate site. His188 serves as the catalytic Proton acceptor.

The protein belongs to the LDH/MDH superfamily. MDH type 2 family.

It catalyses the reaction (S)-malate + NAD(+) = oxaloacetate + NADH + H(+). Catalyzes the reversible oxidation of malate to oxaloacetate. The sequence is that of Malate dehydrogenase from Chlamydia trachomatis serovar A (strain ATCC VR-571B / DSM 19440 / HAR-13).